The chain runs to 60 residues: Small, acid-soluble spore protein C2 (60 aa).

It belongs to the alpha/beta-type SASP family. Post-translationally, SASP are degraded in the first minutes of spore germination and provide amino acids for both new protein synthesis and metabolism.

In terms of biological role, SASP are bound to spore DNA. They are double-stranded DNA-binding proteins that cause DNA to change to an a-like conformation. They protect the DNA backbone from chemical and enzymatic cleavage and are thus involved in dormant spore's high resistance to UV light. The chain is Small, acid-soluble spore protein C2 (sspC2) from Clostridium perfringens (strain 13 / Type A).